Here is a 594-residue protein sequence, read N- to C-terminus: Suppressor of hairless protein (594 aa).

The interval 20 to 87 (ETTVVNPNGS…QQQQQHQQQM (68 aa)) is disordered. Residues 58–87 (QQQQQQLQVHHQQQQQQQQQQQQQQHQQQM) show a composition bias toward low complexity. 3 DNA-binding regions span residues 131–141 (QKSYGNEKRFF), 239–244 (SKPSKK), and 266–271 (RLRSQT). The IPT/TIG domain maps to 429–519 (PIVNSLNLNG…YATGLTFTYT (91 aa)). Composition is skewed to low complexity over residues 542 to 562 (NNNN…AGSP) and 569 to 580 (QQQQQQHQALPS). A disordered region spans residues 542–594 (NNNNNITSISNNNNSNNAGSPAAGGGLQQQQQQHQALPSISEVQWNSHGSGLS). The segment covering 582-594 (SEVQWNSHGSGLS) has biased composition (polar residues).

Belongs to the Su(H) family. As to quaternary structure, interacts with activated cleaved Notch. Interacts with Hairless, this interaction preventing its DNA-binding activity. Interacts with insv (via BEN domain).

It is found in the nucleus. It localises to the cytoplasm. In terms of biological role, transcriptional regulator that plays a central role in Notch signaling, a signaling pathway involved in cell-cell communication that regulates a broad spectrum of cell-fate determinations. Binds directly the 5'-GTGRGAR-3' DNA consensus sequence, which is present in the regulatory region of several genes. Acts as a transcriptional repressor when it is not associated with Notch proteins. When associated with some Notch protein, it acts as a transcriptional activator that activates transcription of Notch target genes. Required for transcription of Sim. Specifically binds to the immunoglobulin kappa-type J segment recombination signal sequence. Required for neurogenesis in imaginal disks. In the larval brain, might play a role as a transducer of Notch signaling during type II neuroblast development. Also functions independently of the Notch pathway, in the development of the bristle sensory organ precursor cell. The chain is Suppressor of hairless protein (Su(H)) from Drosophila melanogaster (Fruit fly).